A 567-amino-acid chain; its full sequence is Proline--tRNA ligase (567 aa).

This sequence belongs to the class-II aminoacyl-tRNA synthetase family. ProS type 1 subfamily. In terms of assembly, homodimer.

The protein localises to the cytoplasm. The enzyme catalyses tRNA(Pro) + L-proline + ATP = L-prolyl-tRNA(Pro) + AMP + diphosphate. Its function is as follows. Catalyzes the attachment of proline to tRNA(Pro) in a two-step reaction: proline is first activated by ATP to form Pro-AMP and then transferred to the acceptor end of tRNA(Pro). As ProRS can inadvertently accommodate and process non-cognate amino acids such as alanine and cysteine, to avoid such errors it has two additional distinct editing activities against alanine. One activity is designated as 'pretransfer' editing and involves the tRNA(Pro)-independent hydrolysis of activated Ala-AMP. The other activity is designated 'posttransfer' editing and involves deacylation of mischarged Ala-tRNA(Pro). The misacylated Cys-tRNA(Pro) is not edited by ProRS. In Geobacillus sp. (strain WCH70), this protein is Proline--tRNA ligase.